Here is a 448-residue protein sequence, read N- to C-terminus: Beta-glucosidase A (448 aa).

The active-site Proton donor is the Glu166. The active-site Nucleophile is Glu355.

The protein belongs to the glycosyl hydrolase 1 family.

It carries out the reaction Hydrolysis of terminal, non-reducing beta-D-glucosyl residues with release of beta-D-glucose.. Its pathway is glycan metabolism; cellulose degradation. The chain is Beta-glucosidase A (bglA) from Acetivibrio thermocellus (strain ATCC 27405 / DSM 1237 / JCM 9322 / NBRC 103400 / NCIMB 10682 / NRRL B-4536 / VPI 7372) (Clostridium thermocellum).